The chain runs to 152 residues: Protein Smg homolog (152 aa).

Belongs to the Smg family.

This Bordetella petrii (strain ATCC BAA-461 / DSM 12804 / CCUG 43448) protein is Protein Smg homolog.